The following is a 210-amino-acid chain: Germin-like protein subfamily 3 member 4 (210 aa).

The N-terminal stretch at 1-18 (MKFFVVIVFCAIFLSVSG) is a signal peptide. C27 and C44 are oxidised to a cystine. The region spanning 58 to 190 (TKLTEAGDTD…VFGIDQEHIK (133 aa)) is the Cupin type-1 domain. A glycan (N-linked (GlcNAc...) asparagine) is linked at N73. H106, H108, E113, and H152 together coordinate Mn(2+).

It belongs to the germin family. In terms of assembly, oligomer (believed to be a pentamer but probably hexamer).

Its subcellular location is the secreted. The protein localises to the extracellular space. It localises to the apoplast. Functionally, may play a role in plant defense. Probably has no oxalate oxidase activity even if the active site is conserved. The protein is Germin-like protein subfamily 3 member 4 of Arabidopsis thaliana (Mouse-ear cress).